A 140-amino-acid chain; its full sequence is Nucleoside diphosphate kinase (140 aa).

6 residues coordinate ATP: Lys11, Phe59, Arg87, Thr93, Arg104, and Asn114. Residue His117 is the Pros-phosphohistidine intermediate of the active site.

Belongs to the NDK family. As to quaternary structure, homotetramer. Requires Mg(2+) as cofactor.

The protein resides in the cytoplasm. It catalyses the reaction a 2'-deoxyribonucleoside 5'-diphosphate + ATP = a 2'-deoxyribonucleoside 5'-triphosphate + ADP. The enzyme catalyses a ribonucleoside 5'-diphosphate + ATP = a ribonucleoside 5'-triphosphate + ADP. In terms of biological role, major role in the synthesis of nucleoside triphosphates other than ATP. The ATP gamma phosphate is transferred to the NDP beta phosphate via a ping-pong mechanism, using a phosphorylated active-site intermediate. The polypeptide is Nucleoside diphosphate kinase (Paracoccus denitrificans (strain Pd 1222)).